A 361-amino-acid chain; its full sequence is Phosphoserine aminotransferase (361 aa).

The L-glutamate site is built by Ser9 and Arg42. Pyridoxal 5'-phosphate contacts are provided by residues Ala76 to Arg77, Trp102, Thr153, Asp173, and Gln196. Lys197 carries the post-translational modification N6-(pyridoxal phosphate)lysine. Asn238–Thr239 provides a ligand contact to pyridoxal 5'-phosphate.

The protein belongs to the class-V pyridoxal-phosphate-dependent aminotransferase family. SerC subfamily. In terms of assembly, homodimer. Pyridoxal 5'-phosphate is required as a cofactor.

It localises to the cytoplasm. It catalyses the reaction O-phospho-L-serine + 2-oxoglutarate = 3-phosphooxypyruvate + L-glutamate. The catalysed reaction is 4-(phosphooxy)-L-threonine + 2-oxoglutarate = (R)-3-hydroxy-2-oxo-4-phosphooxybutanoate + L-glutamate. Its pathway is amino-acid biosynthesis; L-serine biosynthesis; L-serine from 3-phospho-D-glycerate: step 2/3. It participates in cofactor biosynthesis; pyridoxine 5'-phosphate biosynthesis; pyridoxine 5'-phosphate from D-erythrose 4-phosphate: step 3/5. Its function is as follows. Catalyzes the reversible conversion of 3-phosphohydroxypyruvate to phosphoserine and of 3-hydroxy-2-oxo-4-phosphonooxybutanoate to phosphohydroxythreonine. This chain is Phosphoserine aminotransferase, found in Serratia proteamaculans (strain 568).